A 569-amino-acid chain; its full sequence is MIIFKNLLKLLIILLTIKLYFCIEIKREEHLTILNELNENSDVIQYSILPGNNEEYEIVKGIQEDAIVYGYYMSNVEVNGWAYLSLVSNDKYNDSTQSRAFGYLEGYLTKDLIWNSKVNYYKNAFNSSEIPNKLDDWLTENIESIHTFIVNNRKSRYWNQITLVMDQINGMLDGYNEANTNSSETLSLHDFFVLNMFGDLFDLMPALNLDKEYKYFQKDLNDIQDWFKRSQHCSALIKVSSDYSELYSGHTTWSGYYTMLRIFKSYNQQFSSDVSGTLSKRNIFSSYPGALISVDDFYLLGDTRMVVIETTNSLVTNDLYHLIRPTTVLSWMRVIVSNRMSTNGKEWCENFQRYNSGTYNNQWMIVSYNLFVPYNELKDGALYVLEQIPGYIEFSDQTQALRQGWWNSYNIPFYETIYDASGYNNYTANNYSDSTIYYMSYQTCPRAEIFRNFAGYVESLEDFQSLLRYNDFEYDPLSHKLPFYAIASRYDLSKKNPSPFGATDTKVTCNSMIDQNTIVAISGPTTSNGQPIFEWNSKIDFMESTSHLGCPEKYNFPWVSFSDTTFRNL.

The signal sequence occupies residues 1 to 22; sequence MIIFKNLLKLLIILLTIKLYFC. N-linked (GlcNAc...) asparagine glycans are attached at residues N93, N126, N181, N425, and N430.

This sequence belongs to the phospholipase B-like family.

The protein resides in the secreted. Probable phospholipase. This chain is Phospholipase B-like protein D (plbD), found in Dictyostelium discoideum (Social amoeba).